An 80-amino-acid polypeptide reads, in one-letter code: UPF0512 protein Q (80 aa).

The protein belongs to the UPF0512 family.

The polypeptide is UPF0512 protein Q (Dictyostelium discoideum (Social amoeba)).